Here is a 1004-residue protein sequence, read N- to C-terminus: Liprin-beta homolog (1004 aa).

Low complexity-rich tracts occupy residues 50 to 63 and 149 to 161; these read NGNS…TIGS and SPPS…SSSL. Disordered stretches follow at residues 50–122 and 135–161; these read NGNS…RSSR and HRTD…SSSL. 2 coiled-coil regions span residues 280–328 and 364–396; these read CQEL…VNQS and DEMS…ALDE. 4 disordered regions span residues 341 to 366, 432 to 497, 528 to 550, and 648 to 686; these read HTNG…DDEM, PSDS…GGNQ, NGNE…GKAS, and FSKL…LGTV. Polar residues predominate over residues 434–453; that stretch reads DSMSHSTSFPVSLSSTTSNG. Over residues 458–474 the composition is skewed to low complexity; sequence STVQSSSSYNSSLSAVS. Polar residues-rich tracts occupy residues 531 to 541 and 648 to 684; these read EGANHNYSSAS and FSKL…NHLG. SAM domains lie at 698-762, 770-833, and 858-930; these read WRSE…IEED, WDVH…LKKA, and VVRW…LLGP.

Belongs to the liprin family. Liprin-beta subfamily. In terms of tissue distribution, expressed in pharyngeal muscle, particularly posterior bulb, adjacent to the dorsal and ventral cord (but not in ventral cord neurons), and in body wall muscles.

Involved in the regulation of synaptic function at neuromuscular junctions. Together with the liprin-alpha protein syd-2, may play a role in regulating the structure of the neuronal region, called the active zone, from which synaptic vesicles send neurotransmitter signals across the synapse. Does not seem to be required for neuronal development. May regulate the disassembly of focal adhesions. Does not bind receptor-like tyrosine phosphatases type 2A. In Caenorhabditis elegans, this protein is Liprin-beta homolog.